The chain runs to 522 residues: MVLMILPIIGSVSASEGLVAMVTLCLVYMIMKYMHTEIPEGLKRLPGPKPLPIIGNMLEVHNNPHLSLTAMSERYGSVFQIQIGMRPVVVLSGNETVRQALIKQGEDFAGRSDLYSFKFINDGKSLAFSTDKAGVWRARRKLAMSALRSFATLEGTTPEYSCALEEHVLKEGEYLVKQLTSVMDVSGSFDPFRHIVVSVANVICGMCFGRRYSHDDQELLGLVNMSDEFGQVVGSGNPADFIPILRYLPNRTMKRFMDINDRFNNFVQKIVSEHYESYDKDNIRDITDSLIDHCEDRKLDENANIQVSDEKIVGIVNDLFGAGFDTISTALSWAVVYLVAYPETQERLHQELKEKVGMIRTPRLSDKINLPLLEAFILEIFRHSSFLPFTIPHCTIKDTSLNGYFIPKDTCVFINQWQVNHDPELWKEPSSFNPDRFLSADGTELNKLEGEKVLVFGMGKRRCIGEAIGRNEVYLFLAILLQRLRFQEKPGHPLDMTPEYGLTMKHKRCQLKASMRPWGQEE.

F229 is a binding site for substrate. Heme is bound at residue C463.

The protein belongs to the cytochrome P450 family. Heme serves as cofactor. In terms of tissue distribution, liver.

Its subcellular location is the endoplasmic reticulum membrane. The protein localises to the microsome membrane. The catalysed reaction is an organic molecule + reduced [NADPH--hemoprotein reductase] + O2 = an alcohol + oxidized [NADPH--hemoprotein reductase] + H2O + H(+). Functionally, cytochromes P450 are a group of heme-thiolate monooxygenases. They oxidize a variety of structurally unrelated compounds, including steroids, fatty acids, and xenobiotics. This Oncorhynchus mykiss (Rainbow trout) protein is Cytochrome P450 1A3 (cyp1a3).